We begin with the raw amino-acid sequence, 120 residues long: Large ribosomal subunit protein bL20 (120 aa).

The protein belongs to the bacterial ribosomal protein bL20 family.

In terms of biological role, binds directly to 23S ribosomal RNA and is necessary for the in vitro assembly process of the 50S ribosomal subunit. It is not involved in the protein synthesizing functions of that subunit. The protein is Large ribosomal subunit protein bL20 of Ligilactobacillus salivarius (strain UCC118) (Lactobacillus salivarius).